The following is a 437-amino-acid chain: Enolase (437 aa).

A (2R)-2-phosphoglycerate-binding site is contributed by Q162. Catalysis depends on E204, which acts as the Proton donor. The Mg(2+) site is built by D251, E297, and D324. (2R)-2-phosphoglycerate contacts are provided by K349, R378, S379, and K400. The active-site Proton acceptor is the K349.

It belongs to the enolase family. Mg(2+) is required as a cofactor.

The protein resides in the cytoplasm. Its subcellular location is the secreted. It localises to the cell surface. The enzyme catalyses (2R)-2-phosphoglycerate = phosphoenolpyruvate + H2O. Its pathway is carbohydrate degradation; glycolysis; pyruvate from D-glyceraldehyde 3-phosphate: step 4/5. Its function is as follows. Catalyzes the reversible conversion of 2-phosphoglycerate (2-PG) into phosphoenolpyruvate (PEP). It is essential for the degradation of carbohydrates via glycolysis. The polypeptide is Enolase (Chlorobaculum parvum (strain DSM 263 / NCIMB 8327) (Chlorobium vibrioforme subsp. thiosulfatophilum)).